The sequence spans 965 residues: Phosphoenolpyruvate carboxylase (965 aa).

Ser11 carries the phosphoserine modification. Residues His173 and Lys601 contribute to the active site.

It belongs to the PEPCase type 1 family. In terms of assembly, homotetramer. The cofactor is Mg(2+).

The protein localises to the cytoplasm. It catalyses the reaction oxaloacetate + phosphate = phosphoenolpyruvate + hydrogencarbonate. The protein operates within photosynthesis; C3 acid pathway. By light-reversible phosphorylation. Through the carboxylation of phosphoenolpyruvate (PEP) it forms oxaloacetate, a four-carbon dicarboxylic acid source for the tricarboxylic acid cycle. In Solanum tuberosum (Potato), this protein is Phosphoenolpyruvate carboxylase (PPC1).